The sequence spans 163 residues: NADH-quinone oxidoreductase subunit I (163 aa).

4Fe-4S ferredoxin-type domains are found at residues 54–84 and 94–123; these read LRRY…IDSH and TRYD…LTRL. Residues cysteine 64, cysteine 67, cysteine 70, cysteine 74, cysteine 103, cysteine 106, cysteine 109, and cysteine 113 each coordinate [4Fe-4S] cluster.

Belongs to the complex I 23 kDa subunit family. In terms of assembly, NDH-1 is composed of 14 different subunits. Subunits NuoA, H, J, K, L, M, N constitute the membrane sector of the complex. It depends on [4Fe-4S] cluster as a cofactor.

It localises to the cell inner membrane. The enzyme catalyses a quinone + NADH + 5 H(+)(in) = a quinol + NAD(+) + 4 H(+)(out). In terms of biological role, NDH-1 shuttles electrons from NADH, via FMN and iron-sulfur (Fe-S) centers, to quinones in the respiratory chain. The immediate electron acceptor for the enzyme in this species is believed to be ubiquinone. Couples the redox reaction to proton translocation (for every two electrons transferred, four hydrogen ions are translocated across the cytoplasmic membrane), and thus conserves the redox energy in a proton gradient. This chain is NADH-quinone oxidoreductase subunit I, found in Halorhodospira halophila (strain DSM 244 / SL1) (Ectothiorhodospira halophila (strain DSM 244 / SL1)).